Reading from the N-terminus, the 165-residue chain is Phosphopantetheine adenylyltransferase (165 aa).

Residue serine 11 participates in substrate binding. ATP contacts are provided by residues 11–12 (SF) and histidine 19. Substrate is bound by residues lysine 43, threonine 76, and arginine 90. Residues 91-93 (GIR), glutamate 101, and 126-132 (FSFISSS) each bind ATP.

Belongs to the bacterial CoaD family. As to quaternary structure, homohexamer. Mg(2+) serves as cofactor.

The protein localises to the cytoplasm. The enzyme catalyses (R)-4'-phosphopantetheine + ATP + H(+) = 3'-dephospho-CoA + diphosphate. The protein operates within cofactor biosynthesis; coenzyme A biosynthesis; CoA from (R)-pantothenate: step 4/5. In terms of biological role, reversibly transfers an adenylyl group from ATP to 4'-phosphopantetheine, yielding dephospho-CoA (dPCoA) and pyrophosphate. In Latilactobacillus sakei subsp. sakei (strain 23K) (Lactobacillus sakei subsp. sakei), this protein is Phosphopantetheine adenylyltransferase.